The following is a 631-amino-acid chain: MSKIIGIDLGTTNSCVAVMEGASPKVIENAEGARTTPSIVAFTEDGERLVGQPAKRQGVTNPERTFFAVKRLIGRRYDDPTVEKDKKLVPYKVVRADNGDAWVESDGKKYSPSQISAFILQKMKETAESFLGEKVEKAVITVPAYFNDAQRQATKDAGRIAGLEVLRIINEPTAAALAYGLDKKNSGTIAVYDLGGGTFDVSVLEIGDGVFEVKSTNGDTFLGGEDFDMRLVNYLADEFKKEQGIDLRNDKLALQRLKEAAEKAKIELSSATQTEINLPFITADASGPKHLTMKLTRAKFEALVEDLIQRTMEPCRLALKDAGLSAGQIDEVVLVGGMTRMPKVQEMVKQFFGKEPHKGVNPDEVVAIGAAIQAGVLQGDVKDVLLLDVTPLSLGIETLGGVFTRLIDRNTTIPTKKSQVFSTAEDGQTAVTIRVFQGEREMAADNKILGQFDLVGIPPAPRGVPQIEVTFDIDANGIVQVSAKDKGTGKEQQIRIQASGGLNDADIEKMVKDAESHAADDKKRRALAEAKNHGEALVHSTEKALSEHGDKVGAAEKGAIESALGELKTALTTEDAEAIQAKTQALAQASLKLGEAMYSAQQGGEQPGAAKKDDVVDAEFTEVDDDKKKSA.

Thr198 is modified (phosphothreonine; by autocatalysis). Residues 598–631 (YSAQQGGEQPGAAKKDDVVDAEFTEVDDDKKKSA) are disordered.

It belongs to the heat shock protein 70 family.

Functionally, acts as a chaperone. This Azorhizobium caulinodans (strain ATCC 43989 / DSM 5975 / JCM 20966 / LMG 6465 / NBRC 14845 / NCIMB 13405 / ORS 571) protein is Chaperone protein DnaK.